We begin with the raw amino-acid sequence, 1188 residues long: NF-X1-type zinc finger protein NFXL1 (1188 aa).

Basic and acidic residues predominate over residues 1–15 (MSFQVRRDRSDDRSH). 2 disordered regions span residues 1-52 (MSFQ…ETLD) and 65-195 (QHNA…VAKE). Composition is skewed to polar residues over residues 19–34 (HQQT…SSVV) and 168–186 (ASGT…TRPV). Residues 223–279 (CMICYDKVGRSANIWSCSSCYSIFHINCIKRWARAPTSVDLLAEKNQGDNWRCPGCQ) form an RING-type; degenerate zinc finger. NF-X1-type zinc fingers lie at residues 335-353 (CPHV…PCKA), 390-409 (CGRH…PCQV), 454-473 (CGNH…DCDL), 513-532 (CRLH…PCLV), 572-607 (CGRH…PCQK), 611-630 (CGQH…PCLE), 668-686 (CGHS…PCST), 721-751 (CGMH…TCRQ), and 760-781 (CRHT…RCEF). The R3H domain occupies 894 to 963 (PKWVLAVEER…KRFTVVHVTA (70 aa)). A disordered region spans residues 1100 to 1188 (SDDSWGAEDS…VVDDWEKVCE (89 aa)). Composition is skewed to polar residues over residues 1126–1138 (AKSN…SVNR) and 1159–1169 (EESSSSKTTGK).

The protein belongs to the NFX1 family. Expressed in seedlings, roots, stems, leaves, buds, flowers and siliques.

It localises to the nucleus. Its pathway is protein modification; protein ubiquitination. Mediates E2-dependent ubiquitination. Confers resistance to osmotic stress such as high salinity. Promotes H(2)O(2) production. Negative regulator of some defense-related genes via an salicylic acid (SA)-dependent signaling pathway. Confers susceptibility to the compatible phytopathogen Pseudomonas syringae pv. tomato strain DC3000 (Pst DC3000). Mediates resistance to type A trichothecenes (phytotoxins produced by phytopathogenic fungi). This chain is NF-X1-type zinc finger protein NFXL1 (NFXL1), found in Arabidopsis thaliana (Mouse-ear cress).